We begin with the raw amino-acid sequence, 95 residues long: Aspartyl/glutamyl-tRNA(Asn/Gln) amidotransferase subunit C (95 aa).

It belongs to the GatC family. In terms of assembly, heterotrimer of A, B and C subunits.

The catalysed reaction is L-glutamyl-tRNA(Gln) + L-glutamine + ATP + H2O = L-glutaminyl-tRNA(Gln) + L-glutamate + ADP + phosphate + H(+). The enzyme catalyses L-aspartyl-tRNA(Asn) + L-glutamine + ATP + H2O = L-asparaginyl-tRNA(Asn) + L-glutamate + ADP + phosphate + 2 H(+). Functionally, allows the formation of correctly charged Asn-tRNA(Asn) or Gln-tRNA(Gln) through the transamidation of misacylated Asp-tRNA(Asn) or Glu-tRNA(Gln) in organisms which lack either or both of asparaginyl-tRNA or glutaminyl-tRNA synthetases. The reaction takes place in the presence of glutamine and ATP through an activated phospho-Asp-tRNA(Asn) or phospho-Glu-tRNA(Gln). The chain is Aspartyl/glutamyl-tRNA(Asn/Gln) amidotransferase subunit C from Prochlorococcus marinus (strain NATL2A).